Consider the following 122-residue polypeptide: Double-headed protease inhibitor, submandibular gland (122 aa).

2 consecutive Kazal-like domains span residues 10 to 70 (GGRK…NCDI) and 71 to 121 (ECTQ…QCES). Intrachain disulfides connect Cys16–Cys50, Cys28–Cys47, Cys36–Cys68, Cys72–Cys101, Cys79–Cys98, and Cys87–Cys119.

The protein resides in the secreted. Its function is as follows. This inhibitor is composed of two homologous actively inhibiting halves: one which inhibits trypsin, the other which inhibits elastase. In Meles meles (Eurasian badger), this protein is Double-headed protease inhibitor, submandibular gland.